The chain runs to 163 residues: Nucleotide-binding protein APL_1231 (163 aa).

It belongs to the YajQ family.

Functionally, nucleotide-binding protein. The sequence is that of Nucleotide-binding protein APL_1231 from Actinobacillus pleuropneumoniae serotype 5b (strain L20).